The primary structure comprises 107 residues: Nucleoid-associated protein Pnuc_0701 (107 aa).

This sequence belongs to the YbaB/EbfC family. Homodimer.

It localises to the cytoplasm. It is found in the nucleoid. Its function is as follows. Binds to DNA and alters its conformation. May be involved in regulation of gene expression, nucleoid organization and DNA protection. The protein is Nucleoid-associated protein Pnuc_0701 of Polynucleobacter asymbioticus (strain DSM 18221 / CIP 109841 / QLW-P1DMWA-1) (Polynucleobacter necessarius subsp. asymbioticus).